We begin with the raw amino-acid sequence, 612 residues long: DEAD-box ATP-dependent RNA helicase 11 (612 aa).

Disordered regions lie at residues 1-70 (MSAS…SGGG) and 83-104 (GAGG…WDRR). At serine 2 the chain carries N-acetylserine. Gly residues-rich tracts occupy residues 61–70 (SGGGGASGGG) and 83–94 (GAGGGGGGGGGW). The Q motif motif lies at 151-179 (NTFADIDLGDALNLNIRRCKYVRPTPVQR). The Helicase ATP-binding domain occupies 182 to 366 (IPILLAERDL…ADFMSNYIFL (185 aa)). ATP is bound at residue 195–202 (AQTGSGKT). Positions 310 to 313 (DEAD) match the DEAD box motif. A Helicase C-terminal domain is found at 377–542 (LITQRVEFVQ…EVPEWLTRYA (166 aa)). Residues 547-583 (FGGGKKRSGGRFGGRDFRREGSYSRGGGGGGGGGGSD) form a disordered region. A compositionally biased stretch (basic and acidic residues) spans 559–568 (GGRDFRREGS). Over residues 570 to 583 (SRGGGGGGGGGGSD) the composition is skewed to gly residues.

It belongs to the DEAD box helicase family. DDX3/DED1 subfamily.

The catalysed reaction is ATP + H2O = ADP + phosphate + H(+). The polypeptide is DEAD-box ATP-dependent RNA helicase 11 (RH11) (Arabidopsis thaliana (Mouse-ear cress)).